Here is an 886-residue protein sequence, read N- to C-terminus: MKSQSQATPITGDEIRKAFLDFYESKSHLIIPSSSLIPDDPTVMLTIAGMLPFKPVFLGLRNRPSPRASSSQKCLRTNDIENVGVTARHHTFFEMLGNFSFGDYFKKEAIQWAWELITDIYHLKPENIIISVFHEDHESEKIWRDNIGIIPERIIRLDEKDNFWSSGATGPCGPCSELYYDFNPEKGLKNIDLEDGDRFIEFYNLVFMQYNRDSNGMLSDLKFKNIDTGMGLERMAQILQKKTNNYETDLILPIVKEAALIANIDYFSSDDRTKISLKILGDHTRAIIHLISDGVVASNLGRGYILRRLLRRMIRHGRLLAIKDDFLSRLASIGISLMQNTYPDLKNNKERILREINIEEKRFLETLDRGEKLLNDLIRSGEKLISGTKAFELYDTYGFPLELTKEILEEKNINVDLEGFTREMEAQKERAKAASQKIDLTLKGSIEREIDLFDQTIFEGYDSLNSQGIVKGIFFESNSVEKAIQGQTVQIILDQTSFYGESGGQVGDTGTISRNDAEIDIDKVIRKKNIFLHCGTVRKGEICRNQLVETRVDKFNRAKAESNHTATHLLQSALKLIIDKSVSQRGSLVGFNKLRFDFNSPQPLSKEQISQVESLVNSWISENHPIEVKNMDKDDALKAGALAMFGEKYGDIVRVVDVPGVSMELCGGTHVQTTSEVGSFKIISEIGISSGIRRIEALSGQLVLDYFKERDETVNKLSDLLKARPSQLFERIDSLQTELVNKNKEIQRMKDEIAYFKYSSLSSSAKKIGSFSLIINQIDGLDGSSLQSAALDLTSKLGDKSVVILGGIPDTEKKKLLFVVSFGDDLVRRGMHAGKLINEISRICSGGGGGKPNFAQAGAKDIDKLNDALEYARKDLWEKLLSYSDK.

His-564, His-568, Cys-666, and His-670 together coordinate Zn(2+).

This sequence belongs to the class-II aminoacyl-tRNA synthetase family. Requires Zn(2+) as cofactor.

It localises to the cytoplasm. It catalyses the reaction tRNA(Ala) + L-alanine + ATP = L-alanyl-tRNA(Ala) + AMP + diphosphate. Its function is as follows. Catalyzes the attachment of alanine to tRNA(Ala) in a two-step reaction: alanine is first activated by ATP to form Ala-AMP and then transferred to the acceptor end of tRNA(Ala). Also edits incorrectly charged Ser-tRNA(Ala) and Gly-tRNA(Ala) via its editing domain. In Prochlorococcus marinus (strain MIT 9515), this protein is Alanine--tRNA ligase.